Here is a 378-residue protein sequence, read N- to C-terminus: Chaperone protein DnaJ (378 aa).

The J domain occupies Asp3–Gly67. The segment at Gly132 to Arg214 adopts a CR-type zinc-finger fold. Residues Cys145, Cys148, Cys162, Cys165, Cys188, Cys191, Cys202, and Cys205 each coordinate Zn(2+). CXXCXGXG motif repeat units follow at residues Cys145–Gly152, Cys162–Gly169, Cys188–Gly195, and Cys202–Gly209.

This sequence belongs to the DnaJ family. In terms of assembly, homodimer. It depends on Zn(2+) as a cofactor.

It localises to the cytoplasm. In terms of biological role, participates actively in the response to hyperosmotic and heat shock by preventing the aggregation of stress-denatured proteins and by disaggregating proteins, also in an autonomous, DnaK-independent fashion. Unfolded proteins bind initially to DnaJ; upon interaction with the DnaJ-bound protein, DnaK hydrolyzes its bound ATP, resulting in the formation of a stable complex. GrpE releases ADP from DnaK; ATP binding to DnaK triggers the release of the substrate protein, thus completing the reaction cycle. Several rounds of ATP-dependent interactions between DnaJ, DnaK and GrpE are required for fully efficient folding. Also involved, together with DnaK and GrpE, in the DNA replication of plasmids through activation of initiation proteins. The sequence is that of Chaperone protein DnaJ from Prochlorococcus marinus (strain SARG / CCMP1375 / SS120).